A 277-amino-acid polypeptide reads, in one-letter code: 3-methyl-2-oxobutanoate hydroxymethyltransferase (277 aa).

Positions 53 and 96 each coordinate Mg(2+). 3-methyl-2-oxobutanoate contacts are provided by residues 53–54 (DS), Asp96, and Lys126. Mg(2+) is bound at residue Glu128. The active-site Proton acceptor is the Glu195.

The protein belongs to the PanB family. Homodecamer; pentamer of dimers. The cofactor is Mg(2+).

The protein localises to the cytoplasm. It carries out the reaction 3-methyl-2-oxobutanoate + (6R)-5,10-methylene-5,6,7,8-tetrahydrofolate + H2O = 2-dehydropantoate + (6S)-5,6,7,8-tetrahydrofolate. It functions in the pathway cofactor biosynthesis; (R)-pantothenate biosynthesis; (R)-pantoate from 3-methyl-2-oxobutanoate: step 1/2. Catalyzes the reversible reaction in which hydroxymethyl group from 5,10-methylenetetrahydrofolate is transferred onto alpha-ketoisovalerate to form ketopantoate. This chain is 3-methyl-2-oxobutanoate hydroxymethyltransferase, found in Chlorobium phaeobacteroides (strain DSM 266 / SMG 266 / 2430).